A 305-amino-acid polypeptide reads, in one-letter code: 2-oxoacid:ferredoxin oxidoreductase subunit beta (305 aa).

Positions 12, 15, and 46 each coordinate [4Fe-4S] cluster. Residues 44–47 (IGCS) and His-65 each bind thiamine diphosphate. Asp-90 is a Mg(2+) binding site. 91–92 (GD) serves as a coordination point for thiamine diphosphate. Residues Asn-118 and Val-120 each coordinate Mg(2+). Thiamine diphosphate is bound at residue 122 to 123 (GL). Cys-197 contributes to the [4Fe-4S] cluster binding site.

Heterodimer composed of an alpha and a beta subunit. The cofactor is [4Fe-4S] cluster. Thiamine diphosphate is required as a cofactor. It depends on Mg(2+) as a cofactor.

It is found in the cytoplasm. It catalyses the reaction a 2-oxocarboxylate + 2 oxidized [2Fe-2S]-[ferredoxin] + CoA = an acyl-CoA + 2 reduced [2Fe-2S]-[ferredoxin] + CO2 + H(+). Catalyzes the coenzyme A-dependent oxidative decarboxylation of different 2-oxoacids such as 2-oxoglutarate, pyruvate and 2-oxobutyrate to form their CoA derivatives. The sequence is that of 2-oxoacid:ferredoxin oxidoreductase subunit beta from Sulfolobus sp.